A 406-amino-acid polypeptide reads, in one-letter code: HEAT repeat-containing taxis protein OE_2401F (406 aa).

7 HEAT repeats span residues 7–41 (LERS…NLDE), 42–78 (PEPE…VDAL), 90–127 (GATW…EDTA), 153–184 (IEQP…LGRL), 185–215 (TTEQ…LGRF), 216–252 (ETAE…NVPP), and 370–406 (VGGD…GGKT).

Interacts with chemotaxis (Che) proteins.

Its function is as follows. Involved in taxis signal transduction. Essential for the ability to control the direction of flagellar rotation. May have a role between CheY and the flagellum. The sequence is that of HEAT repeat-containing taxis protein OE_2401F from Halobacterium salinarum (strain ATCC 29341 / DSM 671 / R1).